The primary structure comprises 426 residues: Glutamate-1-semialdehyde 2,1-aminomutase (426 aa).

Residue K265 is modified to N6-(pyridoxal phosphate)lysine.

Belongs to the class-III pyridoxal-phosphate-dependent aminotransferase family. HemL subfamily. As to quaternary structure, homodimer. Requires pyridoxal 5'-phosphate as cofactor.

Its subcellular location is the cytoplasm. It carries out the reaction (S)-4-amino-5-oxopentanoate = 5-aminolevulinate. It functions in the pathway porphyrin-containing compound metabolism; protoporphyrin-IX biosynthesis; 5-aminolevulinate from L-glutamyl-tRNA(Glu): step 2/2. This is Glutamate-1-semialdehyde 2,1-aminomutase from Marinobacter nauticus (strain ATCC 700491 / DSM 11845 / VT8) (Marinobacter aquaeolei).